Here is a 312-residue protein sequence, read N- to C-terminus: Ornithine carbamoyltransferase (312 aa).

Carbamoyl phosphate-binding positions include 57–60 (STRT), Q84, R108, and 135–138 (HPCQ). Residues N166, D226, and 230-231 (SM) contribute to the L-ornithine site. Residues 265–266 (CL) and R293 each bind carbamoyl phosphate.

The protein belongs to the aspartate/ornithine carbamoyltransferase superfamily. OTCase family.

The protein resides in the cytoplasm. It catalyses the reaction carbamoyl phosphate + L-ornithine = L-citrulline + phosphate + H(+). The protein operates within amino-acid biosynthesis; L-arginine biosynthesis; L-arginine from L-ornithine and carbamoyl phosphate: step 1/3. Its function is as follows. Reversibly catalyzes the transfer of the carbamoyl group from carbamoyl phosphate (CP) to the N(epsilon) atom of ornithine (ORN) to produce L-citrulline. The chain is Ornithine carbamoyltransferase from Brucella suis biovar 1 (strain 1330).